Consider the following 1446-residue polypeptide: Toll-like receptor 7 (1446 aa).

Residues 1-16 form the signal peptide; that stretch reads MAAILLLLLGFSWSLA. Over 17-1049 the chain is Extracellular; the sequence is VESALAPKES…QHGIPESYIP (1033 aa). LRR repeat units follow at residues 133–156, 158–180, 188–211, 213–235, 246–270, 271–294, 295–318, 320–342, 344–368, 369–392, 393–416, 417–440, 442–464, 465–488, 489–511, 513–535, 536–559, 561–582, 584–605, 606–629, 631–652, 653–675, and 677–699; these read LQTL…AFEG, ATLK…TLEL, LKQL…FLCP, GNLQ…GFAD, GSEL…GISR, LRRL…ALAG, LASL…LFAG, KELR…LFHR, EQLL…TFAG, LIRL…TFKE, LYFL…AFLP, LYNL…LFNG, YVLS…VFKN, CSDL…LQDL, AMLR…SFKN, HQLT…MFQD, LPRL…SFDK, FELE…VFAT, VSLL…AFIP, SNLK…KLQE, IRVK…MSIP, NTIE…AFVD, and ANLA…QLRV. Positions 716–773 constitute an LRRCT domain; sequence NPFECDCTMDWLQRINNLTTRQHPRVMDMANIECVMPHARGAAVRPLSGLRPQDFLCR. Disulfide bonds link Cys-722-Cys-772, Cys-796-Cys-802, and Cys-800-Cys-815. 6 LRR repeats span residues 828-851, 852-875, 876-899, 900-923, 925-947, and 951-979; these read PMDS…AFIG, RKNL…TFAS, LASL…EFEQ, LSAL…TLAP, AALE…QMHA, and GTRL…SYVA. Cysteines 966 and 993 form a disulfide. A helical transmembrane segment spans residues 1050–1070; that stretch reads LLAAALALLFLLVVIAMVFAF. Over 1071-1446 the chain is Cytoplasmic; it reads RESLRIWLFA…QGPHVQAYLV (376 aa). A TIR domain is found at 1096–1233; the sequence is KLYDAVLLHS…HFWEKLRYAL (138 aa). 2 disordered regions span residues 1301 to 1332 and 1388 to 1446; these read QNYS…NHHL and RPKR…AYLV. Residues 1395–1413 are compositionally biased toward polar residues; sequence HLQQAQAGTLGSKASQAAH. The span at 1414–1426 shows a compositional bias: low complexity; sequence QQQQQQQQQQQQQ. The segment covering 1427-1439 has biased composition (polar residues); it reads PNPTAVSGQQQGP.

It belongs to the Toll-like receptor family. As to expression, expressed in the fan-shaped body and the ellipsoid body, which are components of the locomotion center in the CNS (at protein level).

The protein localises to the cell membrane. Toll-related receptor which binds to the neurotrophins NT1 and spz5. Essential for antiviral autophagy, it detects and binds to the vesicular stomatitis virus (vsv) following infection. This role is likely to be independent of the canonical Toll, immune deficiency, and JAK-STAT signaling pathways. Functions in olfactory circuit assembly by promoting synaptic partner matching between olfactory receptor neurons (ORN) axons and projection neurons (PN) dendrites partners in the antennal lobe. Function in the Va1d ORNs is necessary and sufficient for correct targeting to their partner PN dendrites. Also involved in the targeting of other classes of ORN axons. Functions with Toll-6 to regulate motor axon targeting and neuronal survival in the central nervous system (CNS). May be an upstream component of the NF-kappa-B (rel) regulatory cascade. The chain is Toll-like receptor 7 from Drosophila melanogaster (Fruit fly).